The following is an 892-amino-acid chain: Translation initiation factor IF-2 (892 aa).

The tract at residues 88-306 is disordered; it reads KKRTFVKRDP…LQQGFQKPAQ (219 aa). Basic and acidic residues-rich tracts occupy residues 93-159 and 166-216; these read VKRD…KDKV and DMIK…EENK. Residues 254 to 269 show a composition bias toward basic residues; it reads GRGRNAKAARPAKKGK. The span at 270–282 shows a compositional bias: basic and acidic residues; it reads HAESKADREEARA. A tr-type G domain is found at 391–560; that stretch reads PRAPVVTIMG…LLQAEVLELK (170 aa). The segment at 400-407 is G1; sequence GHVDHGKT. Residue 400–407 coordinates GTP; sequence GHVDHGKT. The G2 stretch occupies residues 425-429; it reads GITQH. The tract at residues 446–449 is G3; that stretch reads DTPG. GTP contacts are provided by residues 446 to 450 and 500 to 503; these read DTPGH and NKID. The interval 500-503 is G4; that stretch reads NKID. The tract at residues 536-538 is G5; it reads SAK.

Belongs to the TRAFAC class translation factor GTPase superfamily. Classic translation factor GTPase family. IF-2 subfamily.

It is found in the cytoplasm. Functionally, one of the essential components for the initiation of protein synthesis. Protects formylmethionyl-tRNA from spontaneous hydrolysis and promotes its binding to the 30S ribosomal subunits. Also involved in the hydrolysis of GTP during the formation of the 70S ribosomal complex. This Salmonella schwarzengrund (strain CVM19633) protein is Translation initiation factor IF-2.